A 282-amino-acid chain; its full sequence is CD320 antigen (282 aa).

Residues methionine 1–alanine 35 form the signal peptide. Over serine 36–tyrosine 229 the chain is Extracellular. Residues serine 53 to arginine 90 form the LDL-receptor class A 1 domain. 3 cysteine pairs are disulfide-bonded: cysteine 54–cysteine 67, cysteine 61–cysteine 80, and cysteine 74–cysteine 89. Residues tryptophan 72, aspartate 75, aspartate 77, aspartate 79, aspartate 85, and glutamate 86 each contribute to the Ca(2+) site. N-linked (GlcNAc...) asparagine glycosylation is present at asparagine 126. The region spanning alanine 131–glycine 168 is the LDL-receptor class A 2 domain. 3 disulfide bridges follow: cysteine 132/cysteine 145, cysteine 139/cysteine 158, and cysteine 152/cysteine 167. Positions 150, 153, 155, 157, 163, and 164 each coordinate Ca(2+). N-linked (GlcNAc...) asparagine glycosylation is found at asparagine 195 and asparagine 213. A disordered region spans residues methionine 199–serine 223. Polar residues predominate over residues serine 210 to serine 223. The helical transmembrane segment at glycine 230–leucine 250 threads the bilayer. The Cytoplasmic segment spans residues serine 251–proline 282.

In terms of assembly, interacts (via LDL-receptor class A domains) with TCN2. Detected in the germinal center (GC) of lymphoid follicles (at protein level). Expressed abundantly on follicular dendritic cells (FDCs).

The protein localises to the cell membrane. Receptor for transcobalamin saturated with cobalamin (TCbl). Plays an important role in cobalamin uptake. Plasma membrane protein that is expressed on follicular dendritic cells (FDC) and mediates interaction with germinal center B cells. Functions as costimulator to promote B cell responses to antigenic stimuli; promotes B cell differentiation and proliferation. Germinal center-B (GC-B) cells differentiate into memory B-cells and plasma cells (PC) through interaction with T-cells and follicular dendritic cells (FDC). CD320 augments the proliferation of PC precursors generated by IL-10. This Homo sapiens (Human) protein is CD320 antigen (CD320).